Consider the following 1223-residue polypeptide: A disintegrin and metalloproteinase with thrombospondin motifs 14 (1223 aa).

The N-terminal stretch at Met-1–Ala-22 is a signal peptide. Positions Gly-23 to Arg-252 are excised as a propeptide. Residue Asn-109 is glycosylated (N-linked (GlcNAc...) asparagine). In terms of domain architecture, Peptidase M12B spans Tyr-259 to Pro-460. 3 disulfide bridges follow: Cys-336–Cys-382, Cys-376–Cys-455, and Cys-415–Cys-441. A Zn(2+)-binding site is contributed by His-398. The active site involves Glu-399. Positions 402 and 408 each coordinate Zn(2+). In terms of domain architecture, Disintegrin spans Phe-461–Gln-551. Asn-475 carries N-linked (GlcNAc...) asparagine glycosylation. 7 cysteine pairs are disulfide-bonded: Cys-482-Cys-507, Cys-493-Cys-516, Cys-502-Cys-535, Cys-529-Cys-540, Cys-564-Cys-601, Cys-568-Cys-606, and Cys-579-Cys-591. The region spanning Asp-552–Pro-607 is the TSP type-1 1 domain. The tract at residues Leu-730–Met-846 is spacer. TSP type-1 domains are found at residues Asp-847 to Ser-907, Gln-908 to Pro-967, and Cys-968 to Gly-1022. An N-linked (GlcNAc...) asparagine glycan is attached at Asn-941. Cystine bridges form between Cys-980–Cys-1016, Cys-984–Cys-1021, and Cys-995–Cys-1005. Residue Asn-1027 is glycosylated (N-linked (GlcNAc...) asparagine). One can recognise a PLAC domain in the interval Ser-1059–Ala-1097. The disordered stretch occupies residues Pro-1100 to Thr-1223. Positions Asn-1101–Gln-1125 are enriched in pro residues. The segment covering Pro-1199–His-1211 has biased composition (basic and acidic residues).

The precursor is cleaved by a furin endopeptidase. Post-translationally, glycosylated. Can be O-fucosylated by POFUT2 on a serine or a threonine residue found within the consensus sequence C1-X(2)-(S/T)-C2-G of the TSP type-1 repeat domains where C1 and C2 are the first and second cysteine residue of the repeat, respectively. Fucosylated repeats can then be further glycosylated by the addition of a beta-1,3-glucose residue by the glucosyltransferase, B3GALTL. Fucosylation mediates the efficient secretion of ADAMTS family members. Can also be C-glycosylated with one or two mannose molecules on tryptophan residues within the consensus sequence W-X-X-W of the TPRs, and N-glycosylated. These other glycosylations can also facilitate secretion. As to expression, expressed in retina and at low levels in brain, lung and placenta. High expression in fetal tissues.

It is found in the secreted. The protein resides in the extracellular space. Its subcellular location is the extracellular matrix. Its function is as follows. Has aminoprocollagen type I processing activity in the absence of ADAMTS2. Seems to be synthesized as a latent enzyme that requires activation to display aminoprocollagen peptidase activity. Cleaves lysyl oxidase LOX at a site downstream of its propeptide cleavage site to produce a short LOX form. This chain is A disintegrin and metalloproteinase with thrombospondin motifs 14 (ADAMTS14), found in Homo sapiens (Human).